The following is a 74-amino-acid chain: CLAVATA3/ESR (CLE)-related protein 19 (74 aa).

The first 24 residues, 1-24 (MKIKGLMILASSLLILAFIHQSES), serve as a signal peptide directing secretion. N-linked (GlcNAc...) asparagine glycosylation is found at Asn34 and Asn54. A hydroxyproline mark is found at Pro65 and Pro68. Pro68 carries O-linked (Ara...) hydroxyproline glycosylation.

Belongs to the CLV3/ESR signal peptide family. In terms of processing, the O-glycosylation (arabinosylation) of the hydroxyproline Pro-68 enhances binding affinity of the CLE19p peptide for its receptor. As to expression, mostly expressed in heart-shape embryos, pollen and young flower buds, and, to a lower extent, in inflorescence, leaves and roots.

Its subcellular location is the secreted. It localises to the extracellular space. Functionally, extracellular signal peptide that regulates cell fate. Represses root apical meristem maintenance. This chain is CLAVATA3/ESR (CLE)-related protein 19, found in Arabidopsis thaliana (Mouse-ear cress).